The chain runs to 492 residues: Aerolysin-4 (492 aa).

A signal peptide spans 1-23 (MKKLKITGLSLIISGLLMAQAQA). Cystine bridges form between Cys-42-Cys-98 and Cys-182-Cys-187. Residues 68–84 (WQISGLANGWVIMGPGY) form an interaction with host N-linked glycan region. A part of the transmembrane beta-barrel after proteolytic activation of the toxin and insertion into the host membrane region spans residues 256–288 (YGLSEKVTTKNKFKWPLVGETELSIEIAANQSW). An interaction with glycans from host GPI-anchor region spans residues 346–355 (RWGGNAWYTH). A propeptide spanning residues 446–492 (AAASHSSRARNLSAGQGLRLEIPLDAQELSGLGFNNVSLSVTPAANQ) is cleaved from the precursor.

Belongs to the aerolysin family. In terms of assembly, homodimer in solution; homoheptamer in the host membrane. After binding to GPI-anchored proteins in target membranes and proteolytic removal of the C-terminal propeptide, the protein assembles into a heptameric pre-pore complex. A further conformation change leads to insertion into the host membrane. Post-translationally, proteolytic cleavage and subsequent release of the propeptide trigger a major conformation change, leading to the formation of a heptameric pre-pore that then inserts into the host membrane.

It is found in the secreted. The protein localises to the host cell membrane. Secreted, cytolytic toxin that forms pores in host membranes after proteolytic removal of a C-terminal propeptide, leading to destruction of the membrane permeability barrier and cell death. The pores are formed by transmembrane beta-strands and are approximately 3 nm in diameter. The sequence is that of Aerolysin-4 (ahh4) from Aeromonas hydrophila.